Reading from the N-terminus, the 201-residue chain is ATP-dependent Clp protease proteolytic subunit (201 aa).

Ser-101 serves as the catalytic Nucleophile. His-126 is an active-site residue.

Belongs to the peptidase S14 family. As to quaternary structure, component of the chloroplastic Clp protease core complex.

The protein resides in the plastid. Its subcellular location is the chloroplast stroma. The catalysed reaction is Hydrolysis of proteins to small peptides in the presence of ATP and magnesium. alpha-casein is the usual test substrate. In the absence of ATP, only oligopeptides shorter than five residues are hydrolyzed (such as succinyl-Leu-Tyr-|-NHMec, and Leu-Tyr-Leu-|-Tyr-Trp, in which cleavage of the -Tyr-|-Leu- and -Tyr-|-Trp bonds also occurs).. Its function is as follows. Cleaves peptides in various proteins in a process that requires ATP hydrolysis. Has a chymotrypsin-like activity. Plays a major role in the degradation of misfolded proteins. This chain is ATP-dependent Clp protease proteolytic subunit, found in Chaetosphaeridium globosum (Charophycean green alga).